The following is a 244-amino-acid chain: Probable Ni/Fe-hydrogenase B-type cytochrome subunit (244 aa).

The next 4 membrane-spanning stretches (helical) occupy residues 39-59 (LWHW…FFIG), 73-93 (FLMG…AIGM), 150-171 (FAMF…FAMY), and 204-221 (LGMW…YAAI).

The protein belongs to the HupC/HyaC/HydC family.

It localises to the cell membrane. Functionally, probable b-type cytochrome. This Cupriavidus necator (strain ATCC 17699 / DSM 428 / KCTC 22496 / NCIMB 10442 / H16 / Stanier 337) (Ralstonia eutropha) protein is Probable Ni/Fe-hydrogenase B-type cytochrome subunit (hoxZ).